Reading from the N-terminus, the 700-residue chain is Elongation factor G (700 aa).

One can recognise a tr-type G domain in the interval 8–290; it reads ERYRNIGISA…AVIDYLPAPT (283 aa). GTP is bound by residues 17-24, 88-92, and 142-145; these read AHIDAGKT, DTPGH, and NKMD.

This sequence belongs to the TRAFAC class translation factor GTPase superfamily. Classic translation factor GTPase family. EF-G/EF-2 subfamily.

The protein localises to the cytoplasm. Catalyzes the GTP-dependent ribosomal translocation step during translation elongation. During this step, the ribosome changes from the pre-translocational (PRE) to the post-translocational (POST) state as the newly formed A-site-bound peptidyl-tRNA and P-site-bound deacylated tRNA move to the P and E sites, respectively. Catalyzes the coordinated movement of the two tRNA molecules, the mRNA and conformational changes in the ribosome. In Glaesserella parasuis serovar 5 (strain SH0165) (Haemophilus parasuis), this protein is Elongation factor G.